Reading from the N-terminus, the 362-residue chain is NAC domain-containing protein 5 (362 aa).

The NAC domain maps to 3–151 (NPVGFRFRPT…TYTLCKVKFK (149 aa)). Residues 107–157 (IGEKRVLVFKNHGGSKSDWAMHEYHATFSSPNQIMTYTLCKVKFKGERREF) mediate DNA binding. The tract at residues 240–266 (DDRNNHTPQKPLTGVFSDHSTDGSDSD) is disordered.

Its subcellular location is the nucleus. The polypeptide is NAC domain-containing protein 5 (NAC005) (Arabidopsis thaliana (Mouse-ear cress)).